Consider the following 1897-residue polypeptide: 1,3-beta-glucan synthase component FKS1 (1897 aa).

The disordered stretch occupies residues 1 to 106; the sequence is MSGYPAGHYE…SETFSDFTMR (106 aa). A compositionally biased stretch (basic and acidic residues) spans 8 to 29; it reads HYEDGYGHQEHGGDAYYQDEHG. The span at 74 to 83 shows a compositional bias: low complexity; sequence GDQYYDQGNG. The next 17 membrane-spanning stretches (helical) occupy residues 487 to 507, 525 to 545, 564 to 584, 591 to 611, 655 to 675, 707 to 727, 728 to 748, 1329 to 1349, 1386 to 1406, 1473 to 1493, 1497 to 1517, 1588 to 1608, 1630 to 1650, 1666 to 1686, 1701 to 1721, 1766 to 1786, and 1826 to 1846; these read IWVIHLGAFWFFTAYNAPTLY, WSAVGFGGALVGLIQILATLC, LMFLIAVFIVNLAPGVVVFGF, TICLIIGIVHFFIALATFFFF, LWICVFGAKLVESYFFLTLSL, ILLGLMMFMDLTLFFLDSYLW, YVICNTIFSVARSFYLGVSIW, NMFIMLSVQMFMIVLINLGAL, CVVSIFIVFFISFVPLAVQEL, FAGPSIYAGSRLLLMLLFATS, TPALIWFWVSLLALCISPFLF, IFFSEIIAPLVQVAVTLVPYL, IAIVAFGPIGVNAGVSGMFFG, FGAVLAAIAHAIAVIILLVIF, VLGMISAAAIQRFIYKLIISL, FSADFVLGHILLFVMLPALCI, and FAILYFTMLVLFLILLIAPLV.

Belongs to the glycosyltransferase 48 family. As to quaternary structure, component of the 1,3-beta-glucan synthase (GS) complex composed of a catalytic subunit fksA and a regulatory subunit.

The protein localises to the mitochondrion. The protein resides in the cell membrane. The enzyme catalyses [(1-&gt;3)-beta-D-glucosyl](n) + UDP-alpha-D-glucose = [(1-&gt;3)-beta-D-glucosyl](n+1) + UDP + H(+). Its function is as follows. Catalytic subunit of the 1,3-beta-glucan synthase. Synthesizes 1,3-beta-glucan, a major structural component of the fungal cell wall. Involved in cell wall synthesis, maintenance and remodeling. In Aspergillus niger (strain ATCC MYA-4892 / CBS 513.88 / FGSC A1513), this protein is 1,3-beta-glucan synthase component FKS1.